The primary structure comprises 67 residues: Protein LITTLE ZIPPER 3 (67 aa).

Positions 14 to 59 (YIMKENERLRKKAELLNQENQQLLFQLKQKLSKTKNSNNGSNNDNK) form a coiled coil. Residues 42–67 (QKLSKTKNSNNGSNNDNKSSSASGQS) are disordered.

As to quaternary structure, interacts with REV. Interacts with ATBH-8, ATBH-9, ATB-14 and ATB-15. As to expression, expressed in the adaxial epidermis of the cotyledons and leaves, and in the vascular cylinder of wild-type torpedo stage embryos. Confined in the central zone and the organizing center in the shoot apical meristem.

Its subcellular location is the nucleus. Its function is as follows. Competitive inhibitor of the HD-ZIPIII transcription factors in shoot apical meristem (SAM) development. Acts by forming non-functional heterodimers. Part of a negative feedback loop. Involved in SAM development and lateral organ patterning. Essential for proper functioning of stem cells in the SAM. In Arabidopsis thaliana (Mouse-ear cress), this protein is Protein LITTLE ZIPPER 3.